A 382-amino-acid polypeptide reads, in one-letter code: Low-specificity L-threonine aldolase (382 aa).

Lys-214 bears the N6-(pyridoxal phosphate)lysine mark.

It belongs to the threonine aldolase family. In terms of assembly, homotetramer. The cofactor is pyridoxal 5'-phosphate.

The enzyme catalyses L-threonine = acetaldehyde + glycine. It catalyses the reaction L-allo-threonine = acetaldehyde + glycine. It functions in the pathway amino-acid degradation; L-threonine degradation via aldolase pathway; acetaldehyde and glycine from L-threonine: step 1/1. The sequence is that of Low-specificity L-threonine aldolase (GLY1) from Eremothecium gossypii (strain ATCC 10895 / CBS 109.51 / FGSC 9923 / NRRL Y-1056) (Yeast).